We begin with the raw amino-acid sequence, 125 residues long: Small ribosomal subunit protein eS8 (125 aa).

Positions 1–20 (MIWQGRSRRKPSGGFYRKAR) are disordered.

The protein belongs to the eukaryotic ribosomal protein eS8 family. In terms of assembly, part of the 30S ribosomal subunit.

This chain is Small ribosomal subunit protein eS8 (rps8e), found in Archaeoglobus fulgidus (strain ATCC 49558 / DSM 4304 / JCM 9628 / NBRC 100126 / VC-16).